The following is a 545-amino-acid chain: E3 ubiquitin-protein ligase ipaH9.8 (545 aa).

Residues 1–242 (MLPINNNFSL…YHGPRIYFSM (242 aa)) form an interaction with target proteins region. LRR repeat units follow at residues 57 to 77 (NSDELRLDRLNLSSLPDNLPA), 78 to 99 (QITLLNVSYNQLTNLPELPVTL), 100 to 117 (KKLYSASNKLSELPVLPP), 118 to 139 (ALESLQVQHNELENLPALPDSL), 140 to 157 (LTMNISYNEIVSLPSLPL), 158 to 179 (ALKNLRATRNFLTELPAFSEGN), 182 to 203 (VVREYFFDRNQISHIPESILNL), and 205 to 228 (NECSIHISDNPLSSHALQALQRLT). A linker region spans residues 243 to 250 (SDGQQNTL). The interval 251–545 (HRPLADAVTA…SENGSQLHHS (295 aa)) is E3 ubiquitin-protein ligase catalytic domain. An NEL domain is found at 253 to 545 (PLADAVTAWF…SENGSQLHHS (293 aa)). Cysteine 337 acts as the Glycyl thioester intermediate in catalysis.

This sequence belongs to the LRR-containing bacterial E3 ligase family. In terms of assembly, also interacts with human and mouse U2AF1 (U2AF35). In terms of processing, ubiquitinated in the presence of host E1 ubiquitin-activating enzyme, E2 ubiquitin-conjugating enzyme and ubiquitin.

The protein resides in the secreted. The protein localises to the host cytoplasm. Its subcellular location is the host nucleus. It carries out the reaction S-ubiquitinyl-[E2 ubiquitin-conjugating enzyme]-L-cysteine + [acceptor protein]-L-lysine = [E2 ubiquitin-conjugating enzyme]-L-cysteine + N(6)-ubiquitinyl-[acceptor protein]-L-lysine.. Its activity is regulated as follows. Exists in an autoinhibited state in the absence of substrate protein, due to interactions of the leucine-rich repeats with NEL domain. Is activated upon binding to a substrate protein. Functionally, effector E3 ubiquitin ligase that interferes with host's ubiquitination pathway and modulates the acute inflammatory responses, thus facilitating bacterial colonization within the host cell. Interacts with IKBKG (NEMO) and TNIP1 (ABIN-1), a ubiquitin-binding adapter protein, which results in TNIP1-dependent 'Lys-27'-linked polyubiquitination of IKBKG. Consequently, polyubiquitinated IKBKG undergoes proteasome-dependent degradation, which perturbs NF-kappa-B activation during bacterial infection. Mediates polyubiquitination of host U2AF1, leading to its proteasomal degradation. Catalyzes 'Lys-48'-linked polyubiquitination and subsequent degradation of a subset of host guanylate-binding proteins (GBP1, GBP2, GBP4 and GBP6), thereby suppressing host cell defense. In contrast, host GBP3 and GBP7 are not ubiquitinated by IpaH9.8. Uses UBE2D2 (UBCH5B) as an E2 ubiquitin-conjugating enzyme. The protein is E3 ubiquitin-protein ligase ipaH9.8 (ipaH9.8) of Shigella boydii serotype 4 (strain Sb227).